Reading from the N-terminus, the 169-residue chain is Ribosome maturation factor RimM (169 aa).

Residues Glu94 to Leu168 enclose the PRC barrel domain.

Belongs to the RimM family. In terms of assembly, binds ribosomal protein uS19.

The protein resides in the cytoplasm. Its function is as follows. An accessory protein needed during the final step in the assembly of 30S ribosomal subunit, possibly for assembly of the head region. Essential for efficient processing of 16S rRNA. May be needed both before and after RbfA during the maturation of 16S rRNA. It has affinity for free ribosomal 30S subunits but not for 70S ribosomes. The polypeptide is Ribosome maturation factor RimM (Limosilactobacillus fermentum (strain NBRC 3956 / LMG 18251) (Lactobacillus fermentum)).